The chain runs to 1164 residues: Receptor-like protein kinase BRI1-like 3 (1164 aa).

Positions 1-23 are cleaved as a signal peptide; it reads MKQQWQFLILCLLVLFLTVDSRG. At 24–772 the chain is on the extracellular side; that stretch reads RRLLSDDVND…RSHAHPKKQS (749 aa). Asparagine 32 carries an N-linked (GlcNAc...) asparagine glycan. A Cys pair 1 motif is present at residues 65 to 72; it reads CTWRGVSC. LRR repeat units follow at residues 77–98, 102–123, 125–146, 151–173, 176–197, 202–224, 227–248, 252–274, 278–300, 303–325, 327–347, 352–375, 376–397, 403–424, 427–448, 451–473, 476–498, 500–523, 524–546, and 548–570; these read RVIG…NNLT, NLRS…SSSG, SLEV…DYVF, NLVS…PSAS, RITT…TFIA, SLKH…SFGL, NLTV…VSLS, LLET…DYWG, NLRQ…LSLL, TLEV…FTSC, SLQS…STVV, RITN…TNCS, NLRV…GFCS, VLEK…ELGK, SLKT…EIWT, KLSD…ICVD, NLET…ISKC, NMLW…GKLE, KLAI…LGNC, and NLIW…LASQ. Asparagine 96 and asparagine 112 each carry an N-linked (GlcNAc...) asparagine glycan. A glycan (N-linked (GlcNAc...) asparagine) is linked at asparagine 156. Asparagine 212, asparagine 227, and asparagine 257 each carry an N-linked (GlcNAc...) asparagine glycan. 2 N-linked (GlcNAc...) asparagine glycosylation sites follow: asparagine 362 and asparagine 373. N-linked (GlcNAc...) asparagine glycosylation is present at asparagine 461. N-linked (GlcNAc...) asparagine glycans are attached at residues asparagine 532, asparagine 558, and asparagine 638. LRR repeat units follow at residues 640 to 662, 664 to 686, 688 to 711, and 712 to 734; these read SMIY…YGAM, YLQV…FGGL, AIGV…GGLS, and FLSD…GQLT. N-linked (GlcNAc...) asparagine glycans are attached at residues asparagine 722 and asparagine 743. Residues 748–755 carry the Cys pair 2 motif; the sequence is CGVPLPPC. A helical transmembrane segment spans residues 773-793; sequence IATGMSAGIVFSFMCIVMLIM. The Cytoplasmic portion of the chain corresponds to 794 to 1164; sequence ALYRARKVQK…LVEESRDKEP (371 aa). Phosphothreonine occurs at positions 847 and 855. The region spanning 858-1136 is the Protein kinase domain; that stretch reads FSADSMIGSG…QVMTMFKELV (279 aa). Residues 864–872 and lysine 886 each bind ATP; that span reads IGSGGFGDV. Tyrosine 931 bears the Phosphotyrosine mark. The Proton acceptor role is filled by aspartate 985. Serine 1020 carries the phosphoserine modification. Tyrosine 1028 bears the Phosphotyrosine mark.

This sequence belongs to the protein kinase superfamily. Ser/Thr protein kinase family. In terms of processing, autophosphorylated on Tyr and Thr residues. As to expression, predominantly expressed in vascular tissues. Expressed only during postembryonic development with a very discrete pattern of expression, preferentially in the two protophloem cell files at the elongation zone of the root. The expression in these two cell files attenuates as the phloem cells differentiate in the upper root. In cotyledons and leaves, it is expressed in phloem cells, starting at the cotyledons and shoot apex, moving toward the basal part of the leaves, where the expression is weak. Expressed in the secondary and tertiary veins and in the upper part of the cotyledons and leaves. Weakly or not expressed in the inflorescence stems. Has some complementary expression with BRL1.

The protein resides in the cell membrane. It catalyses the reaction L-seryl-[protein] + ATP = O-phospho-L-seryl-[protein] + ADP + H(+). It carries out the reaction L-threonyl-[protein] + ATP = O-phospho-L-threonyl-[protein] + ADP + H(+). The enzyme catalyses L-tyrosyl-[protein] + ATP = O-phospho-L-tyrosyl-[protein] + ADP + H(+). Receptor with a dual specificity kinase activity acting on both serine/threonine- and tyrosine-containing substrates. Binds brassinolide. Regulates, in response to brassinosteroid binding, a signaling cascade involved in plant development. May be involved in cell growth and vascular differentiation. In Arabidopsis thaliana (Mouse-ear cress), this protein is Receptor-like protein kinase BRI1-like 3 (BRL3).